Here is a 1244-residue protein sequence, read N- to C-terminus: SWI/SNF chromatin remodeling complex subunit swsn-7 (1244 aa).

Residues 24 to 116 (QRKMAEFYNS…YLSKFEQVET (93 aa)) form the ARID domain. Polar residues predominate over residues 486-496 (FTQGSNQQQNP). 3 disordered regions span residues 486–534 (FTQG…GAAP), 556–583 (NREQ…ILAH), and 597–619 (DRRT…ESQL). Over residues 497 to 508 (HHSQGGHQLGHS) the composition is skewed to low complexity. The segment covering 556 to 566 (NREQYSTQSSQ) has biased composition (polar residues). A compositionally biased stretch (pro residues) spans 567–578 (PHPPHTNVPPSP). Positions 610-619 (PSTNSGESQL) are enriched in polar residues. Positions 623-697 (TEKWIRQNCV…IVAQGIRLIR (75 aa)) form a DNA-binding region, RFX-type winged-helix. Positions 1134–1244 (EEEQQKMLSE…TTPVRAGAGI (111 aa)) are disordered. Positions 1142–1158 (SEVPSSASLSSMAGSSS) are enriched in low complexity. Polar residues-rich tracts occupy residues 1159–1186 (QLPT…SNKP) and 1194–1212 (LNFS…FTAG). Over residues 1220–1231 (PIQQHIPSQPSP) the composition is skewed to low complexity.

As to quaternary structure, component of the SWI/SNF-B (PBAF) chromatin remodeling complex.

It localises to the nucleus. Functionally, involved in transcriptional activation and repression of select genes by chromatin remodeling (alteration of DNA-nucleosome topology). Required for the stability of the SWI/SNF chromatin remodeling complex SWI/SNF-B (PBAF). Required for regulation of a stress response gene network, probably as part of the PBAF complex and perhaps acting in concert with histone demethylase jmjc-1. Binds to the ethanol and stress response elements (ESRE) in the promoter regions of hsp-16.1 and hsp-16.2, probably as part of the PBAF complex. The polypeptide is SWI/SNF chromatin remodeling complex subunit swsn-7 (Caenorhabditis elegans).